A 278-amino-acid chain; its full sequence is Probable septum site-determining protein MinC (278 aa).

The disordered stretch occupies residues 104–167; sequence RTQQSVDPAP…ASHTPAAPQS (64 aa).

This sequence belongs to the MinC family. As to quaternary structure, interacts with MinD and FtsZ.

Functionally, cell division inhibitor that blocks the formation of polar Z ring septums. Rapidly oscillates between the poles of the cell to destabilize FtsZ filaments that have formed before they mature into polar Z rings. Prevents FtsZ polymerization. This chain is Probable septum site-determining protein MinC, found in Bordetella avium (strain 197N).